A 149-amino-acid polypeptide reads, in one-letter code: Putative pre-16S rRNA nuclease (149 aa).

This sequence belongs to the YqgF nuclease family.

The protein localises to the cytoplasm. Its function is as follows. Could be a nuclease involved in processing of the 5'-end of pre-16S rRNA. This chain is Putative pre-16S rRNA nuclease, found in Burkholderia ambifaria (strain MC40-6).